We begin with the raw amino-acid sequence, 228 residues long: CD302 antigen (228 aa).

An N-terminal signal peptide occupies residues 1–20 (MPHAALSSLVLLSLATAIFA). The Extracellular portion of the chain corresponds to 21–165 (DCPSSIWVQF…YDKKYLSDNH (145 aa)). Residues 30–149 (FQGSCYTFLQ…CEMSSVTGTL (120 aa)) form the C-type lectin domain. Residue Asn-107 is glycosylated (N-linked (GlcNAc...) asparagine). Residues Cys-125 and Cys-140 are joined by a disulfide bond. A helical transmembrane segment spans residues 166–186 (ILISTLVIASTVTLAVLGAVI). Residues 187–228 (WFLYRRSARSGFTSFSPAPQSPYSDGCALVVSEEDEYSVQLD) are Cytoplasmic-facing.

Its subcellular location is the membrane. The protein resides in the cell projection. It is found in the filopodium. The protein localises to the cytoplasm. It localises to the cell cortex. Its subcellular location is the microvillus. Potential multifunctional C-type lectin receptor that may play roles in endocytosis and phagocytosis as well as in cell adhesion and migration. In Rattus norvegicus (Rat), this protein is CD302 antigen (Cd302).